The following is a 563-amino-acid chain: Putative GMC-type oxidoreductase L128 (563 aa).

The N-terminal stretch at 1–21 is a signal peptide; the sequence is MTSSIVLKFFLIATLLVIANS. 48-77 contacts FAD; that stretch reads DYVIVGGGAAGSVLLDKCISYGYKCTLIER. The active-site Proton acceptor is the histidine 504.

The protein belongs to the GMC oxidoreductase family. FAD serves as cofactor.

This is Putative GMC-type oxidoreductase L128 from Acanthamoeba polyphaga mimivirus (APMV).